The sequence spans 813 residues: Molybdenum cofactor sulfurase (813 aa).

K228 bears the N6-(pyridoxal phosphate)lysine mark. C391 is a catalytic residue. Positions 625-670 are disordered; the sequence is PSLRHAKAHMQKHQGPKRSAAIEKSSAHSFHDPPTPPDSDSENRKR. The span at 628-640 shows a compositional bias: basic residues; sequence RHAKAHMQKHQGP. Residues 648–812 enclose the MOSC domain; sequence KSSAHSFHDP…IKVGDKVSIG (165 aa).

The protein belongs to the class-V pyridoxal-phosphate-dependent aminotransferase family. MOCOS subfamily. Pyridoxal 5'-phosphate serves as cofactor.

The enzyme catalyses Mo-molybdopterin + L-cysteine + AH2 = thio-Mo-molybdopterin + L-alanine + A + H2O. In terms of biological role, sulfurates the molybdenum cofactor. Sulfation of molybdenum is essential for xanthine dehydrogenase (XDH) and aldehyde oxidase (ADO) enzymes in which molybdenum cofactor is liganded by 1 oxygen and 1 sulfur atom in active form. The sequence is that of Molybdenum cofactor sulfurase from Botryotinia fuckeliana (strain B05.10) (Noble rot fungus).